A 570-amino-acid polypeptide reads, in one-letter code: Glycine--tRNA ligase (570 aa).

Residues Arg99 and Glu165 each contribute to the substrate site. ATP is bound by residues 197–199 (RNE), 207–212 (LRLREF), 324–325 (EC), and 443–446 (GIDR). 212–216 (FTQAE) is a binding site for substrate. 439–443 (EPSFG) contributes to the substrate binding site.

This sequence belongs to the class-II aminoacyl-tRNA synthetase family.

It is found in the cytoplasm. The enzyme catalyses tRNA(Gly) + glycine + ATP = glycyl-tRNA(Gly) + AMP + diphosphate. In terms of biological role, catalyzes the attachment of glycine to tRNA(Gly). This Thermococcus kodakarensis (strain ATCC BAA-918 / JCM 12380 / KOD1) (Pyrococcus kodakaraensis (strain KOD1)) protein is Glycine--tRNA ligase.